The primary structure comprises 1136 residues: Probable RNA-dependent RNA polymerase 2 (1136 aa).

Residues 965-989 (SGDSGALSSSSAQPSPTYDPDLEVP) are disordered. The span at 967–980 (DSGALSSSSAQPSP) shows a compositional bias: low complexity.

Belongs to the RdRP family.

The catalysed reaction is RNA(n) + a ribonucleoside 5'-triphosphate = RNA(n+1) + diphosphate. Functionally, probably involved in the RNA silencing pathway and required for the generation of small interfering RNAs (siRNAs). This is Probable RNA-dependent RNA polymerase 2 (RDR2) from Oryza sativa subsp. japonica (Rice).